Here is a 247-residue protein sequence, read N- to C-terminus: Probable transcriptional regulatory protein PMT_1423 (247 aa).

It belongs to the TACO1 family.

The protein localises to the cytoplasm. The protein is Probable transcriptional regulatory protein PMT_1423 of Prochlorococcus marinus (strain MIT 9313).